The following is a 480-amino-acid chain: Acetyl-coenzyme A carboxylase carboxyl transferase subunit beta, chloroplastic (480 aa).

In terms of domain architecture, CoA carboxyltransferase N-terminal spans 212 to 480 (LWVQCENCYG…FPLNQINKYK (269 aa)). Residues C216, C219, C235, and C238 each contribute to the Zn(2+) site. The C4-type zinc finger occupies 216 to 238 (CENCYGLNYQKFFRSKMNICERC).

The protein belongs to the AccD/PCCB family. In terms of assembly, acetyl-CoA carboxylase is a heterohexamer composed of biotin carboxyl carrier protein, biotin carboxylase and 2 subunits each of ACCase subunit alpha and ACCase plastid-coded subunit beta (accD). Zn(2+) is required as a cofactor.

It is found in the plastid. It localises to the chloroplast stroma. The catalysed reaction is N(6)-carboxybiotinyl-L-lysyl-[protein] + acetyl-CoA = N(6)-biotinyl-L-lysyl-[protein] + malonyl-CoA. The protein operates within lipid metabolism; malonyl-CoA biosynthesis; malonyl-CoA from acetyl-CoA: step 1/1. Functionally, component of the acetyl coenzyme A carboxylase (ACC) complex. Biotin carboxylase (BC) catalyzes the carboxylation of biotin on its carrier protein (BCCP) and then the CO(2) group is transferred by the transcarboxylase to acetyl-CoA to form malonyl-CoA. This is Acetyl-coenzyme A carboxylase carboxyl transferase subunit beta, chloroplastic from Illicium oligandrum (Star anise).